We begin with the raw amino-acid sequence, 55 residues long: Large ribosomal subunit protein bL33 (55 aa).

This sequence belongs to the bacterial ribosomal protein bL33 family.

The polypeptide is Large ribosomal subunit protein bL33 (Methylobacterium nodulans (strain LMG 21967 / CNCM I-2342 / ORS 2060)).